Consider the following 187-residue polypeptide: UPF0301 protein Pcryo_0062 (187 aa).

The protein belongs to the UPF0301 (AlgH) family.

The chain is UPF0301 protein Pcryo_0062 from Psychrobacter cryohalolentis (strain ATCC BAA-1226 / DSM 17306 / VKM B-2378 / K5).